The primary structure comprises 104 residues: Flagellar hook-basal body complex protein FliE (104 aa).

It belongs to the FliE family.

The protein localises to the bacterial flagellum basal body. The sequence is that of Flagellar hook-basal body complex protein FliE from Edwardsiella ictaluri (strain 93-146).